We begin with the raw amino-acid sequence, 359 residues long: Guanine nucleotide-binding protein G(q) subunit alpha (359 aa).

Residues Cys9 and Cys10 are each lipidated (S-palmitoyl cysteine). The 322-residue stretch at 38-359 (RELKLLLLGT…QLNLKEYNLV (322 aa)) folds into the G-alpha domain. Residues 41-54 (KLLLLGTGESGKST) form a G1 motif region. Positions 50, 51, 52, 53, 54, 156, 180, 181, and 183 each coordinate GTP. A Mg(2+)-binding site is contributed by Ser53. Residues 178 to 186 (DVLRVRVPT) are G2 motif. Thr186 lines the Mg(2+) pocket. A G3 motif region spans residues 201–210 (FRMVDVGGQR). The residue at position 209 (Gln209) is a 5-glutamyl histamine. The tract at residues 270 to 277 (ILFLNKKD) is G4 motif. 4 residues coordinate GTP: Asn274, Lys275, Asp277, and Ala331. The G5 motif stretch occupies residues 329–334 (TCATDT).

It belongs to the G-alpha family. G(q) subfamily. As to quaternary structure, g proteins are composed of 3 units; alpha, beta and gamma. The alpha chain contains the guanine nucleotide binding site. Interacts (GDP-bound form) with RIC8A (via C-terminus); promoting GNAQ folding and association with the plasma membrane. Binds NHERF1. Forms a complex with PECAM1 and BDKRB2. Interacts with GAS2L2. Post-translationally, palmitoylated by ZDHHC3 and ZDHHC7. Palmitoylation occurs in the Golgi and participates in the localization of GNAQ to the plasma membrane. Histaminylated at Gln-209 residues by TGM2.

It is found in the cell membrane. It localises to the golgi apparatus. The protein localises to the nucleus. Its subcellular location is the nucleus membrane. The catalysed reaction is GTP + H2O = GDP + phosphate + H(+). Functionally, guanine nucleotide-binding proteins (G proteins) function as transducers downstream of G protein-coupled receptors (GPCRs) in numerous signaling cascades. The alpha chain contains the guanine nucleotide binding site and alternates between an active, GTP-bound state and an inactive, GDP-bound state. Signaling by an activated GPCR promotes GDP release and GTP binding. The alpha subunit has a low GTPase activity that converts bound GTP to GDP, thereby terminating the signal. Both GDP release and GTP hydrolysis are modulated by numerous regulatory proteins. Signaling is mediated via phospholipase C-beta-dependent inositol lipid hydrolysis for signal propagation: activates phospholipase C-beta: following GPCR activation, GNAQ activates PLC-beta (PLCB1, PLCB2, PLCB3 or PLCB4), leading to production of diacylglycerol (DAG) and inositol 1,4,5-trisphosphate (IP3). Required for platelet activation. Regulates B-cell selection and survival and is required to prevent B-cell-dependent autoimmunity. Regulates chemotaxis of BM-derived neutrophils and dendritic cells (in vitro). Transduces FFAR4 signaling in response to long-chain fatty acids (LCFAs). Together with GNA11, required for heart development. This is Guanine nucleotide-binding protein G(q) subunit alpha (Gnaq) from Rattus norvegicus (Rat).